Consider the following 143-residue polypeptide: Hemoglobin cathodic subunit alpha (143 aa).

The residue at position 2 (S2) is an N-acetylserine. The Globin domain maps to 2-143 (SLTAKDKTLV…VSAALADKYR (142 aa)). H59 lines the O2 pocket. Position 89 (H89) interacts with heme b.

It belongs to the globin family. In terms of assembly, heterotetramer of two alpha chains and two beta chains. In terms of tissue distribution, red blood cells.

Functionally, involved in oxygen transport from the gills to the various peripheral tissues. The polypeptide is Hemoglobin cathodic subunit alpha (Conger conger (Conger eel)).